A 307-amino-acid polypeptide reads, in one-letter code: MGAFPPPIDPSYIPSVSLTRLPATAPTADIIATLERDGALILVDLVSPQDVAAINAEIEPYIQKARAESHEAYDLIPKQTIMVPGVVGKSPTMARMAELDVIDTLRTRVLQRKCTATWEDRTEDFSIDPLLNSSLTYHISYGGPRQRLHRDDMIHGIYHRGGEYRLSDETMLGFMIAGSKTTRENGATMAIPGSHKWDHARVPRVDEVCFAEMEPGSALVFLGTVYHGAGHNSVPDQVRKIYGLFFIPGTLRPEENQFLAIPRSKVLGMSDKMLSLLGYKKPGTWLGIVNNGDPAENLAEVLGMANS.

3 residues coordinate Fe cation: histidine 149, aspartate 151, and histidine 227.

The protein belongs to the PhyH family. Homodimer. Fe cation is required as a cofactor.

Its pathway is mycotoxin biosynthesis. In terms of biological role, dioxygenase; part of the gene cluster that mediates the biosynthesis of swainsonine (SW), a cytotoxic fungal alkaloid and a potential cancer therapy drug. Swainsonine production occurs via a multibranched pathway and is dispensable for fungal colonization of plants and infection of insect hosts. The first step of swainsonine biosynthesis is the production of the precursor pipecolic acid (PA) via conversion of L-lysine (Lys) to 1-piperideine-6-carboxylate (P6C) by the aminotransferase swnA, the latter being further reduced to PA by the reductase swnR. PA can be converted from lysine by both the SW biosynthetic cluster and the unclustered genes such as lysine cyclodeaminase. The PKS-NRPS hybrid synthetase swnK uptakes and condensates PA and malonyl-CoA with and without skipping of the ketoreductase (KR) domain in order to produce 3 intermediates, 1-oxoindolizidine, (1S)-1-hydroxyindolizin, and (1R)-1-hydroxyindolizine; with the transisomer (1S)-1-hydroxyindolizin being predominant. The terminal thioester reductase (TE) domain of swnK is involved in reduction of the thioester bond to release the intermediate aldehydes. The oxidoreductase swnN could contribute to the reduction of 1-oxoindolizidine to (1S)-1-hydroxyindolizin and (1R)-1-hydroxyindolizine, contributing to the major route of SW production. The dioxygenase swnH2 would be responsible for the oxidization of (1R)-1-hydroxyindolizine into (1R,2S)-1,2-dihydroxyindolizine and of (1S)-1-hydroxyindolizin to yield both (1R,2S)-1,2-dihydroxyindolizine and (1S,2S)-1,2-dihydroxyindolizine. The dioxygenase swnH1 then performs the conversion of the 1,2-dihydroxyindolizine epimers to SW. The polypeptide is Dioxygenase swnH1 (Metarhizium robertsii (strain ARSEF 23 / ATCC MYA-3075) (Metarhizium anisopliae (strain ARSEF 23))).